The sequence spans 1106 residues: Translation initiation factor IF-2 (1106 aa).

Low complexity-rich tracts occupy residues 57–72 (GKAA…PDAG) and 81–97 (APST…SAPP). 2 disordered regions span residues 57–434 (GKAA…QKVH) and 466–497 (PSKP…RQRR). Composition is skewed to pro residues over residues 113-123 (PAKPAPSAPPS) and 138-148 (PAKPAPSAPPS). Over residues 172–199 (AKPVAKPASAPAPARPAQPLRPQASNRP) the composition is skewed to low complexity. Composition is skewed to pro residues over residues 200 to 214 (PQQP…PAAK) and 223 to 235 (TAPP…PGAP). 3 stretches are compositionally biased toward low complexity: residues 251–292 (PNQQ…QQRR), 319–329 (PQGRQGGAPSR), and 395–405 (YRPAAAPGMAG). Positions 408-422 (RRPDWDDSARLDALR) are enriched in basic and acidic residues. A compositionally biased stretch (basic residues) spans 482 to 497 (ALRRRKKETTRQRQRR). The region spanning 598–771 (RRPPVVTVMG…LLVTEVEDLK (174 aa)) is the tr-type G domain. The tract at residues 607–614 (GHVDHGKT) is G1. 607–614 (GHVDHGKT) lines the GTP pocket. Positions 632–636 (GITQH) are G2. The interval 657-660 (DTPG) is G3. GTP-binding positions include 657-661 (DTPGH) and 711-714 (NKVD). Positions 711 to 714 (NKVD) are G4. The segment at 747–749 (SAL) is G5.

It belongs to the TRAFAC class translation factor GTPase superfamily. Classic translation factor GTPase family. IF-2 subfamily.

It localises to the cytoplasm. Functionally, one of the essential components for the initiation of protein synthesis. Protects formylmethionyl-tRNA from spontaneous hydrolysis and promotes its binding to the 30S ribosomal subunits. Also involved in the hydrolysis of GTP during the formation of the 70S ribosomal complex. This is Translation initiation factor IF-2 from Synechococcus sp. (strain RCC307).